Reading from the N-terminus, the 239-residue chain is Tumor necrosis factor ligand superfamily member 8 (239 aa).

The segment at 1–36 (MEPGLQQAGSCGAPSPDPAMQVQPGSVASPWRSTRP) is disordered. Residues 1 to 43 (MEPGLQQAGSCGAPSPDPAMQVQPGSVASPWRSTRPWRSTSRS) are Cytoplasmic-facing. Residues 44–67 (YFYLSTTALVCLVVAVAIILVLVV) form a helical; Signal-anchor for type II membrane protein membrane-spanning segment. Residues 68–239 (QKKDSTPNTT…LSVFLYSSSD (172 aa)) lie on the Extracellular side of the membrane. N-linked (GlcNAc...) asparagine glycans are attached at residues asparagine 75, asparagine 86, asparagine 114, asparagine 158, asparagine 194, and asparagine 206. One can recognise a THD domain in the interval 103–230 (SWAYLQVSKH…TNTFPLDNVL (128 aa)). Cysteine 156 and cysteine 182 are disulfide-bonded.

Belongs to the tumor necrosis factor family. Homotrimer.

Its subcellular location is the membrane. Functionally, cytokine that binds to TNFRSF8/CD30. Induces proliferation of T-cells. The sequence is that of Tumor necrosis factor ligand superfamily member 8 (Tnfsf8) from Mus musculus (Mouse).